The chain runs to 624 residues: (-)-beta-phellandrene synthase 3, chloroplastic (624 aa).

Residues 1 to 48 constitute a chloroplast transit peptide; that stretch reads MAIVSSVPLASKSCLHKSLISSIHKLKPFCRTIPTLGMSRPGKYVMPS. Mg(2+)-binding residues include Asp-375, Asp-379, and Asp-527. The DDXXD motif signature appears at 375 to 379; sequence DDMYD.

This sequence belongs to the terpene synthase family. Tpsd subfamily. Mg(2+) is required as a cofactor. The cofactor is Mn(2+).

It is found in the plastid. Its subcellular location is the chloroplast. It carries out the reaction (2E)-geranyl diphosphate = (-)-beta-phellandrene + diphosphate. The protein operates within terpene metabolism; oleoresin biosynthesis. Terpene synthase (TPS) involved in the biosynthesis of monoterpene natural products included in conifer oleoresin secretions and volatile emissions; these compounds contribute to biotic and abiotic stress defense against herbivores and pathogens. Catalyzes the conversion of (2E)-geranyl diphosphate (GPP) to (-)-beta-phellandrene. The sequence is that of (-)-beta-phellandrene synthase 3, chloroplastic from Picea sitchensis (Sitka spruce).